The sequence spans 472 residues: L-fuculokinase (472 aa).

This sequence belongs to the FGGY kinase family. The cofactor is a divalent metal cation.

The catalysed reaction is L-fuculose + ATP = L-fuculose 1-phosphate + ADP + H(+). The protein operates within carbohydrate degradation; L-fucose degradation; L-lactaldehyde and glycerone phosphate from L-fucose: step 2/3. Catalyzes the phosphorylation of L-fuculose. The sequence is that of L-fuculokinase from Escherichia coli O157:H7.